The following is a 617-amino-acid chain: Vacuolar protein sorting-associated protein 33A (617 aa).

The tract at residues N268–E287 is disordered.

This sequence belongs to the STXBP/unc-18/SEC1 family. In terms of assembly, component of the class C core vacuole/endosome tethering (CORVET) complex composed of at least Vps8, dor/Vps18, car/Vps33A and Vps16A; unlike in other species, Vps11 is not part of the Drosophila complex. Due to the reduced number of components the Drosophila CORVET complex is often referred to as the miniCORVET complex. Interacts with ema. Component of the homotypic fusion and vacuole protein sorting (HOPS) complex, composed of Vps16A, car/Vps33A, dor/Vps18, Vps39, Vps11 and lt/Vps41. The tethering complex core made up of Vps16A, car/Vps33A and dor/Vps18 and shared by both HOPS and CORVET, preferentially associates with CORVET specific Vps8 over HOPS specific lt/Vps41. Interacts with Syx17 (via SNARE domain); the interaction requires Vps16A, may involve additional components of the HOPS complex and may promote assembly of the Syx17-Snap29-Vamp7 trans-SNARE complex.

It is found in the early endosome. Its subcellular location is the late endosome membrane. It localises to the lysosome membrane. Core component of the class C core vacuole/endosome tethering (CORVET) and the homotypic fusion and vacuole protein sorting (HOPS) tethering complexes involved in endo-lysosomal vesicle trafficking and lysosome biogenesis. The CORVET complex facilitates docking and fusion of endosomal vesicles during endosome maturation, acts upstream of HOPS, but is not involved in autophagic flux. The CORVET complex may cooperate with the early endosomal tether Rbsn-5 to mediate endosomal fusion. The HOPS complex facilitates docking and fusion of lysosomes with late endosomes and several other types of vesicles. The HOPS complex is also involved in autophagy and crinophagy (the elimination of unused secretory granules through their fusion with lysosomes). The HOPS complex probably instigates autophagosome-lysosome fusion by binding autophagosome associated Syx17/syntaxin 17 and promoting assembly of the trans-SNARE complex. Independent of Syx17/syntaxin 17 HOPS is involved in biosynthetic transport to lysosomes and lysosome-related organelles such as eye-pigment granules. Required for endocytic degradation of boss/bride of sevenless and N/Notch in developing ommatidia. The sequence is that of Vacuolar protein sorting-associated protein 33A from Drosophila melanogaster (Fruit fly).